The sequence spans 156 residues: Transcriptional repressor NrdR (156 aa).

The segment at 3 to 34 is a zinc-finger region; it reads CPFCGNIDTQVKDSRPAEDHVSIRRRRFCPAC. The 91-residue stretch at 49-139 folds into the ATP-cone domain; it reads LVVIKTSGKR…VYKNFQAADD (91 aa).

The protein belongs to the NrdR family. Zn(2+) is required as a cofactor.

Its function is as follows. Negatively regulates transcription of bacterial ribonucleotide reductase nrd genes and operons by binding to NrdR-boxes. The protein is Transcriptional repressor NrdR of Ruegeria pomeroyi (strain ATCC 700808 / DSM 15171 / DSS-3) (Silicibacter pomeroyi).